Consider the following 1316-residue polypeptide: DNA-directed RNA polymerase subunit beta' (1316 aa).

Cys60, Cys62, Cys75, and Cys78 together coordinate Zn(2+). The Mg(2+) site is built by Asp535, Asp537, and Asp539. The Zn(2+) site is built by Cys891, Cys968, Cys975, and Cys978.

It belongs to the RNA polymerase beta' chain family. As to quaternary structure, the RNAP catalytic core consists of 2 alpha, 1 beta, 1 beta' and 1 omega subunit. When a sigma factor is associated with the core the holoenzyme is formed, which can initiate transcription. It depends on Mg(2+) as a cofactor. Zn(2+) is required as a cofactor.

The catalysed reaction is RNA(n) + a ribonucleoside 5'-triphosphate = RNA(n+1) + diphosphate. Its function is as follows. DNA-dependent RNA polymerase catalyzes the transcription of DNA into RNA using the four ribonucleoside triphosphates as substrates. The sequence is that of DNA-directed RNA polymerase subunit beta' from Mycobacterium bovis (strain BCG / Tokyo 172 / ATCC 35737 / TMC 1019).